A 285-amino-acid polypeptide reads, in one-letter code: MNHLYRSFKTIALVGKPRNDINLQMHKNLFHWLMERGYQVLVEKEVAITLELPFEHLATLEEIGHRAQLAIVIGGDGNMLGRARVLAKYDIPLIGINRGNLGFLTDIDPKNAYSQLEACLERGEFFVEERFLLEAKIERASEIVSTSNAVNEAVIHPAKIAHMIDFHVYINDKFAFSQRSDGLIVSTPTGSTAYSLSAGGPILTPNLNAIALVPMFPHTLTSRPLVVDGDSKISIRFAEHNTSQLEVGCDSQITLPFTPDDVVHIQKSEHKLRLLHLKIIIITMC.

D76 (proton acceptor) is an active-site residue. NAD(+) is bound by residues D76–G77, N151–E152, H162, R179, D181, T192–S197, and Q252.

The protein belongs to the NAD kinase family. Requires a divalent metal cation as cofactor.

Its subcellular location is the cytoplasm. The enzyme catalyses NAD(+) + ATP = ADP + NADP(+) + H(+). Involved in the regulation of the intracellular balance of NAD and NADP, and is a key enzyme in the biosynthesis of NADP. Catalyzes specifically the phosphorylation on 2'-hydroxyl of the adenosine moiety of NAD to yield NADP. The polypeptide is NAD kinase (Haemophilus influenzae (strain ATCC 51907 / DSM 11121 / KW20 / Rd)).